The primary structure comprises 254 residues: uncharacterized protein (254 aa).

One can recognise an ABC transporter domain in the interval 6-239; it reads LSVDGVEFAY…NIKAVYGVDA (234 aa). 38 to 45 contributes to the ATP binding site; the sequence is GVNGAGKS.

This sequence belongs to the ABC transporter superfamily.

This is an uncharacterized protein from Methanocaldococcus jannaschii (strain ATCC 43067 / DSM 2661 / JAL-1 / JCM 10045 / NBRC 100440) (Methanococcus jannaschii).